The following is a 1016-amino-acid chain: C2 domain-containing protein 5 (1016 aa).

The 109-residue stretch at 1-109 (MPGKLKVKIV…EAATVISGWF (109 aa)) folds into the C2 domain. Residues aspartate 19, aspartate 26, aspartate 76, aspartate 78, serine 81, and aspartate 84 each coordinate Ca(2+). The residue at position 197 (serine 197) is a Phosphoserine; by PKB/AKT2. 2 positions are modified to phosphoserine: serine 200 and serine 260. A disordered region spans residues 265-330 (LKEIPFNEDP…SGSAGKEGGP (66 aa)). Residues 274–289 (PNPNTHSSGPSTPLKN) are compositionally biased toward polar residues. The span at 290 to 318 (QTYSFSPSKSYSRQSSSSDTDLSLTPKTG) shows a compositional bias: low complexity. Serine 293, serine 295, serine 304, serine 305, and serine 306 each carry phosphoserine. Threonine 317 carries the phosphothreonine modification. A compositionally biased stretch (gly residues) spans 319–328 (MGSGSAGKEG). Serine 323 bears the Phosphoserine mark. Threonine 601 is modified (phosphothreonine). The interval 636-668 (VSEEMIGSPIPEPRQRSRLLRSQSESSDEVTEL) is disordered. A phosphoserine mark is found at serine 643, serine 657, serine 659, serine 661, and serine 662. At threonine 666 the chain carries Phosphothreonine. A phosphoserine mark is found at serine 671, serine 817, and serine 869.

It depends on Ca(2+) as a cofactor. Post-translationally, phosphorylated on Ser-197 by active myristoylated kinase AKT2; insulin-stimulated phosphorylation by AKT2 regulates SLC2A4/GLUT4 translocation into the plasma membrane. Expressed in liver, muscle and fat.

Its subcellular location is the cytoplasmic vesicle membrane. It is found in the cytoplasm. It localises to the cell cortex. The protein localises to the cell membrane. The protein resides in the cell projection. Its subcellular location is the ruffle. Required for insulin-stimulated glucose transport and glucose transporter SLC2A4/GLUT4 translocation from intracellular glucose storage vesicle (GSV) to the plasma membrane (PM) in adipocytes. Binds phospholipid membranes in a calcium-dependent manner and is necessary for the optimal membrane fusion between SLC2A4/GLUT4 GSV and the PM. The chain is C2 domain-containing protein 5 (C2cd5) from Mus musculus (Mouse).